The following is a 297-amino-acid chain: tRNA pseudouridine synthase B (297 aa).

Aspartate 39 (nucleophile) is an active-site residue.

Belongs to the pseudouridine synthase TruB family. Type 1 subfamily.

The enzyme catalyses uridine(55) in tRNA = pseudouridine(55) in tRNA. In terms of biological role, responsible for synthesis of pseudouridine from uracil-55 in the psi GC loop of transfer RNAs. The polypeptide is tRNA pseudouridine synthase B (Lactobacillus acidophilus (strain ATCC 700396 / NCK56 / N2 / NCFM)).